Consider the following 389-residue polypeptide: 5-hydroxytryptamine receptor 1B (389 aa).

The segment at 1 to 27 (MEDAGTPCAPPPPAGSQTGAPPANLSS) is disordered. Residues 1 to 45 (MEDAGTPCAPPPPAGSQTGAPPANLSSAPHNCSAEGYIYQDSIAL) lie on the Extracellular side of the membrane. The segment covering 15 to 27 (GSQTGAPPANLSS) has biased composition (polar residues). 2 N-linked (GlcNAc...) asparagine glycosylation sites follow: Asn24 and Asn31. Residues 46-71 (PWKVLLAILLALLTLATTLSNAFVIA) form a helical membrane-spanning segment. Residues 72-85 (TVYRTRKLHTPANY) lie on the Cytoplasmic side of the membrane. Residues 86–110 (LIASLAVTDLLVSILVMPISTMYAV) form a helical membrane-spanning segment. Residues 111 to 118 (TGRWTLGQ) lie on the Extracellular side of the membrane. A helical transmembrane segment spans residues 119-144 (VVCDLWLSSDITCCTASILHLCVIAL). Cys121 and Cys198 form a disulfide bridge. Asp128 and Thr133 together coordinate ergotamine. A DRY motif; important for ligand-induced conformation changes and signaling motif is present at residues 145-147 (DRY). Over 145–164 (DRYWAITDAVEYSAKRTPKR) the chain is Cytoplasmic. Residues 165–183 (AAVMIALVWVFSISISLPP) form a helical membrane-spanning segment. At 184–204 (FFWRQAKAEEEVSDCVVNTDH) the chain is on the extracellular side. Position 200 (Val200) interacts with ergotamine. A helical transmembrane segment spans residues 205-228 (ILYTVYSTVGAFYFPTLLLIALYG). Residues 229 to 314 (RIYVEARSRI…AARERKATKT (86 aa)) lie on the Cytoplasmic side of the membrane. Positions 258 to 271 (DSPGSTSSVTSVNS) are enriched in polar residues. The disordered stretch occupies residues 258–281 (DSPGSTSSVTSVNSRAPDVPSESG). Residues 315 to 336 (LGIILGAFIVCWLPFFIISLVM) traverse the membrane as a helical segment. Residues 337 to 346 (PICKDACWFH) are Extracellular-facing. The helical transmembrane segment at 347-369 (LAIFDFFTWLGYLNSLINPIIYT) threads the bilayer. Residues 364–368 (NPIIY) carry the NPxxY motif; important for ligand-induced conformation changes and signaling motif. The Cytoplasmic portion of the chain corresponds to 370–389 (MSNEDFKQAFHKLIRFKCAS). A lipid anchor (S-palmitoyl cysteine) is attached at Cys387.

This sequence belongs to the G-protein coupled receptor 1 family. Homodimer. Heterodimer with HTR1D. In terms of processing, phosphorylated. Desensitization of the receptor may be mediated by its phosphorylation. Post-translationally, palmitoylated.

It localises to the cell membrane. In terms of biological role, G-protein coupled receptor for 5-hydroxytryptamine (serotonin). Also functions as a receptor for ergot alkaloid derivatives, various anxiolytic and antidepressant drugs and other psychoactive substances, such as lysergic acid diethylamide (LSD). Ligand binding causes a conformation change that triggers signaling via guanine nucleotide-binding proteins (G proteins) and modulates the activity of downstream effectors, such as adenylate cyclase. HTR1B is coupled to G(i)/G(o) G alpha proteins and mediates inhibitory neurotransmission by inhibiting adenylate cyclase activity. Arrestin family members inhibit signaling via G proteins and mediate activation of alternative signaling pathways. Regulates the release of 5-hydroxytryptamine, dopamine and acetylcholine in the brain, and thereby affects neural activity, nociceptive processing, pain perception, mood and behavior. Besides, plays a role in vasoconstriction of cerebral arteries. The sequence is that of 5-hydroxytryptamine receptor 1B (HTR1B) from Vulpes vulpes (Red fox).